Here is a 171-residue protein sequence, read N- to C-terminus: Nicotinamide-nucleotide adenylyltransferase (171 aa).

The protein belongs to the archaeal NMN adenylyltransferase family.

The protein resides in the cytoplasm. It catalyses the reaction beta-nicotinamide D-ribonucleotide + ATP + H(+) = diphosphate + NAD(+). It functions in the pathway cofactor biosynthesis; NAD(+) biosynthesis; NAD(+) from nicotinamide D-ribonucleotide: step 1/1. This is Nicotinamide-nucleotide adenylyltransferase from Methanococcus maripaludis (strain C6 / ATCC BAA-1332).